A 127-amino-acid polypeptide reads, in one-letter code: Methylglyoxal synthase (127 aa).

The MGS-like domain occupies 1–127; the sequence is MEGQRCIALI…ENLIDFNSAD (127 aa). Residues His12, Lys16, 38-41, and 59-60 each bind substrate; these read TGTT and SG. The active-site Proton donor/acceptor is Asp65. His92 lines the substrate pocket.

This sequence belongs to the methylglyoxal synthase family.

It carries out the reaction dihydroxyacetone phosphate = methylglyoxal + phosphate. Its function is as follows. Catalyzes the formation of methylglyoxal from dihydroxyacetone phosphate. The sequence is that of Methylglyoxal synthase from Agrobacterium fabrum (strain C58 / ATCC 33970) (Agrobacterium tumefaciens (strain C58)).